Consider the following 317-residue polypeptide: Transaldolase (317 aa).

The Schiff-base intermediate with substrate role is filled by Lys-132.

Belongs to the transaldolase family. Type 1 subfamily.

The protein resides in the cytoplasm. It carries out the reaction D-sedoheptulose 7-phosphate + D-glyceraldehyde 3-phosphate = D-erythrose 4-phosphate + beta-D-fructose 6-phosphate. It functions in the pathway carbohydrate degradation; pentose phosphate pathway; D-glyceraldehyde 3-phosphate and beta-D-fructose 6-phosphate from D-ribose 5-phosphate and D-xylulose 5-phosphate (non-oxidative stage): step 2/3. Its function is as follows. Transaldolase is important for the balance of metabolites in the pentose-phosphate pathway. This is Transaldolase from Haemophilus influenzae (strain ATCC 51907 / DSM 11121 / KW20 / Rd).